Here is a 474-residue protein sequence, read N- to C-terminus: Phenylalanine--tRNA ligase alpha subunit (474 aa).

Residues Thr317, 356–358 (QLE), and Tyr396 contribute to the L-phenylalanine site. Glu398 contacts Mg(2+). Phe421 provides a ligand contact to L-phenylalanine.

It belongs to the class-II aminoacyl-tRNA synthetase family. Phe-tRNA synthetase alpha subunit type 2 subfamily. In terms of assembly, tetramer of two alpha and two beta subunits. Requires Mg(2+) as cofactor.

The protein resides in the cytoplasm. The catalysed reaction is tRNA(Phe) + L-phenylalanine + ATP = L-phenylalanyl-tRNA(Phe) + AMP + diphosphate + H(+). The sequence is that of Phenylalanine--tRNA ligase alpha subunit from Archaeoglobus fulgidus (strain ATCC 49558 / DSM 4304 / JCM 9628 / NBRC 100126 / VC-16).